The sequence spans 234 residues: tRNA (guanine-N(1)-)-methyltransferase (234 aa).

Residues Gly-112 and 132 to 137 contribute to the S-adenosyl-L-methionine site; that span reads IGDFIL.

Belongs to the RNA methyltransferase TrmD family. As to quaternary structure, homodimer.

It is found in the cytoplasm. The enzyme catalyses guanosine(37) in tRNA + S-adenosyl-L-methionine = N(1)-methylguanosine(37) in tRNA + S-adenosyl-L-homocysteine + H(+). Its function is as follows. Specifically methylates guanosine-37 in various tRNAs. This is tRNA (guanine-N(1)-)-methyltransferase from Campylobacter jejuni subsp. jejuni serotype O:6 (strain 81116 / NCTC 11828).